We begin with the raw amino-acid sequence, 113 residues long: U11-theraphotoxin-Hhn1a (113 aa).

The first 21 residues, 1 to 21, serve as a signal peptide directing secretion; that stretch reads MNTVRVTFLLVFVLAVSLGQA. Positions 22–74 are excised as a propeptide; the sequence is DKDENRMEMQEKTEQGRSYLDFAENLLLQKLEELEAKLLEEDSEESRNSRQKR. The tract at residues 61-83 is disordered; the sequence is EEDSEESRNSRQKRCIGEGVPCD. 3 cysteine pairs are disulfide-bonded: C75–C90, C82–C95, and C89–C110.

This sequence belongs to the neurotoxin 14 (magi-1) family. 01 (HNTX-16) subfamily. Expressed by the venom gland.

Its subcellular location is the secreted. Its function is as follows. Probable ion channel inhibitor. This Cyriopagopus hainanus (Chinese bird spider) protein is U11-theraphotoxin-Hhn1a.